A 443-amino-acid chain; its full sequence is UDP-N-acetylmuramate--L-alanine ligase (443 aa).

110 to 116 provides a ligand contact to ATP; the sequence is GAHGKTS.

Belongs to the MurCDEF family.

It localises to the cytoplasm. It carries out the reaction UDP-N-acetyl-alpha-D-muramate + L-alanine + ATP = UDP-N-acetyl-alpha-D-muramoyl-L-alanine + ADP + phosphate + H(+). Its pathway is cell wall biogenesis; peptidoglycan biosynthesis. In terms of biological role, cell wall formation. In Streptococcus agalactiae serotype III (strain NEM316), this protein is UDP-N-acetylmuramate--L-alanine ligase.